A 281-amino-acid chain; its full sequence is 2,3,4,5-tetrahydropyridine-2,6-dicarboxylate N-succinyltransferase (281 aa).

Residues arginine 108 and aspartate 145 each contribute to the substrate site.

It belongs to the transferase hexapeptide repeat family. In terms of assembly, homotrimer.

It is found in the cytoplasm. It catalyses the reaction (S)-2,3,4,5-tetrahydrodipicolinate + succinyl-CoA + H2O = (S)-2-succinylamino-6-oxoheptanedioate + CoA. The protein operates within amino-acid biosynthesis; L-lysine biosynthesis via DAP pathway; LL-2,6-diaminopimelate from (S)-tetrahydrodipicolinate (succinylase route): step 1/3. The chain is 2,3,4,5-tetrahydropyridine-2,6-dicarboxylate N-succinyltransferase from Rhodopseudomonas palustris (strain BisB5).